A 477-amino-acid polypeptide reads, in one-letter code: Glycogen synthase (477 aa).

ADP-alpha-D-glucose is bound at residue lysine 15.

The protein belongs to the glycosyltransferase 1 family. Bacterial/plant glycogen synthase subfamily.

It catalyses the reaction [(1-&gt;4)-alpha-D-glucosyl](n) + ADP-alpha-D-glucose = [(1-&gt;4)-alpha-D-glucosyl](n+1) + ADP + H(+). The protein operates within glycan biosynthesis; glycogen biosynthesis. Synthesizes alpha-1,4-glucan chains using ADP-glucose. This is Glycogen synthase from Clostridium acetobutylicum (strain ATCC 824 / DSM 792 / JCM 1419 / IAM 19013 / LMG 5710 / NBRC 13948 / NRRL B-527 / VKM B-1787 / 2291 / W).